Reading from the N-terminus, the 448-residue chain is MEFNNSVSTIYWSLLERKFSIYVLTFLNRLKCILSNPFSISFSNNKYPSFFNANKTFLKRDSCNLFPNQSNIMFFLVVLSKRLCPNYFNNTGEKKNRGDNINDSSGNRFIDESYVSARKSMSKESNKIKQMNRKLAWIEATLNDLDIWRHSYSVFSSSTKMENNLEQQFSVLESKDTPITMMAYESISLVPRSITRTLSRFKTELMGDSNSLILNEFRLAKYQALASIQYIGCLLFILSIISMLSKTMFLKSWITNWWNTSQSHIFLNLFQEERALKELQEMEELLWLDRVMADYVKDQSQDLDIEIYEETIQLVTIYNEDSIQIILHLLTDIISIVTLIVLFIIGRKRLAVLNSWIQELFYSLSDTMKAFSILLLTDLCIGFHSPHGWEIVIGSFLEHLGFSHNKHIISCFVSTFPVILDTVFKYWIFRHLNRISPSIVATYHTMNE.

4 helical membrane-spanning segments follow: residues 224 to 244 (ALAS…ISML), 325 to 345 (IILH…LFII), 373 to 393 (ILLL…EIVI), and 408 to 428 (IISC…KYWI).

This sequence belongs to the CemA family.

The protein resides in the plastid. Its subcellular location is the chloroplast inner membrane. It catalyses the reaction K(+)(in) + H(+)(out) = K(+)(out) + H(+)(in). In terms of biological role, contributes to K(+)/H(+) antiport activity by supporting proton efflux to control proton extrusion and homeostasis in chloroplasts in a light-dependent manner to modulate photosynthesis. Prevents excessive induction of non-photochemical quenching (NPQ) under continuous-light conditions. Indirectly promotes efficient inorganic carbon uptake into chloroplasts. The chain is Potassium/proton antiporter CemA from Angiopteris evecta (Mule's foot fern).